The sequence spans 111 residues: Flagellar hook-basal body complex protein FliE (111 aa).

It belongs to the FliE family.

The protein resides in the bacterial flagellum basal body. This chain is Flagellar hook-basal body complex protein FliE, found in Brucella ovis (strain ATCC 25840 / 63/290 / NCTC 10512).